The following is a 596-amino-acid chain: MFALSKVLRRTQRLRLGACSAVFSKDIQLGGERSFDSNSIASTKREAVPRFYEISSLSNRALSSSAGTKSDQEEDDLEDGFSELEGSKSGQGSTSSDEDEGKLSADEEEEEELDLIETDVSRKTVEKKQSELFKTIVSAPGLSIGSALDKWVEEGNEITRVEIAKAMLQLRRRRMYGRALQMSEWLEANKKIEMTERDYASRLDLTVKIRGLEKGEACMQKIPKSFKGEVLYRTLLANCVAAGNVKKSELVFNKMKDLGFPLSGFTCDQMLLLHKRIDRKKIADVLLLMEKENIKPSLLTYKILIDVKGATNDISGMEQILETMKDEGVELDFQTQALTARHYSGAGLKDKAEKVLKEMEGESLEANRRAFKDLLSIYASLGREDEVKRIWKICESKPYFEESLAAIQAFGKLNKVQEAEAIFEKIVKMDRRASSSTYSVLLRVYVDHKMLSKGKDLVKRMAESGCRIEATTWDALIKLYVEAGEVEKADSLLDKASKQSHTKLMMNSFMYIMDEYSKRGDVHNTEKIFLKMREAGYTSRLRQFQALMQAYINAKSPAYGMRDRLKADNIFPNKSMAAQLAQGDPFKKTAISDILD.

Residues 1–69 (MFALSKVLRR…RALSSSAGTK (69 aa)) constitute a mitochondrion transit peptide. Residues 62-119 (LSSSAGTKSDQEEDDLEDGFSELEGSKSGQGSTSSDEDEGKLSADEEEEEELDLIETD) form a disordered region. Composition is skewed to acidic residues over residues 72 to 82 (QEEDDLEDGFS) and 96 to 117 (SDED…DLIE). PPR repeat units lie at residues 228 to 262 (GEVL…GFPL), 263 to 296 (SGFT…NIKP), 297 to 331 (SLLT…GVEL), 332 to 366 (DFQT…SLEA), 367 to 397 (NRRA…CESK), 399 to 433 (YFEE…DRRA), 434 to 468 (SSST…GCRI), 469 to 503 (EATT…SHTK), and 505 to 539 (MMNS…GYTS).

It belongs to the PPR family. P subfamily.

Its subcellular location is the mitochondrion. The polypeptide is Pentatricopeptide repeat-containing protein At1g80270, mitochondrial (Arabidopsis thaliana (Mouse-ear cress)).